A 364-amino-acid chain; its full sequence is Aminomethyltransferase (364 aa).

Belongs to the GcvT family. As to quaternary structure, the glycine cleavage system is composed of four proteins: P, T, L and H.

The catalysed reaction is N(6)-[(R)-S(8)-aminomethyldihydrolipoyl]-L-lysyl-[protein] + (6S)-5,6,7,8-tetrahydrofolate = N(6)-[(R)-dihydrolipoyl]-L-lysyl-[protein] + (6R)-5,10-methylene-5,6,7,8-tetrahydrofolate + NH4(+). Functionally, the glycine cleavage system catalyzes the degradation of glycine. The protein is Aminomethyltransferase of Klebsiella pneumoniae subsp. pneumoniae (strain ATCC 700721 / MGH 78578).